We begin with the raw amino-acid sequence, 760 residues long: Cellulose synthase-like protein G1 (760 aa).

The next 2 membrane-spanning stretches (helical) occupy residues 28–48 and 54–74; these read IYAIFHTCGIIALMYHHVHSL and TLITCLLLLSDIVLAFMWATT. Active-site residues include Asp142 and Asp447. 5 helical membrane passes run 530 to 550, 558 to 578, 593 to 613, 656 to 676, and 680 to 700; these read IPLTVYGLLPQLALISGVSVF, FWLYIILFFGAYAQDLSDFLL, LMIKGLSSFFFGFIEFILKTL, VAIVNLLAFVWGLYGILFCGG, and LELMLVSFAVVNCLPIYGAMV.

It belongs to the glycosyltransferase 2 family. Plant cellulose synthase-like G subfamily. As to expression, expressed in young seedlings, primarily in the vascular tissue.

The protein resides in the golgi apparatus membrane. In terms of biological role, thought to be a Golgi-localized beta-glycan synthase that polymerize the backbones of noncellulosic polysaccharides (hemicelluloses) of plant cell wall. In Arabidopsis thaliana (Mouse-ear cress), this protein is Cellulose synthase-like protein G1 (CSLG1).